Here is a 144-residue protein sequence, read N- to C-terminus: D-aminoacyl-tRNA deacylase (144 aa).

Residues 136-137 (GP) carry the Gly-cisPro motif, important for rejection of L-amino acids motif.

This sequence belongs to the DTD family. Homodimer.

Its subcellular location is the cytoplasm. The catalysed reaction is glycyl-tRNA(Ala) + H2O = tRNA(Ala) + glycine + H(+). The enzyme catalyses a D-aminoacyl-tRNA + H2O = a tRNA + a D-alpha-amino acid + H(+). An aminoacyl-tRNA editing enzyme that deacylates mischarged D-aminoacyl-tRNAs. Also deacylates mischarged glycyl-tRNA(Ala), protecting cells against glycine mischarging by AlaRS. Acts via tRNA-based rather than protein-based catalysis; rejects L-amino acids rather than detecting D-amino acids in the active site. By recycling D-aminoacyl-tRNA to D-amino acids and free tRNA molecules, this enzyme counteracts the toxicity associated with the formation of D-aminoacyl-tRNA entities in vivo and helps enforce protein L-homochirality. The sequence is that of D-aminoacyl-tRNA deacylase from Corynebacterium glutamicum (strain R).